The chain runs to 90 residues: Small cysteine-rich outer membrane protein OmcA (90 aa).

An N-terminal signal peptide occupies residues 1–19 (MKKAVLIAAMFCGVVSLSS). A lipid anchor (N-palmitoyl cysteine) is attached at Cys20. Residue Cys20 is the site of S-diacylglycerol cysteine attachment. The tract at residues 69-90 (TECNSQSPQVKGCTSPDGRCKQ) is disordered.

As to quaternary structure, part of a disulfide cross-linked outer membrane complex (COMC) composed of the major outer membrane porin (MOMP), the small cysteine-rich protein (OmcA) and the large cysteine-rich periplasmic protein (OmcB).

The protein resides in the cell outer membrane. Its function is as follows. In elementary bodies (EBs, the infectious stage, which is able to survive outside the host cell) provides the structural integrity of the outer envelope through disulfide cross-links with the large cysteine-rich periplasmic protein and the major outer membrane porin. It has been described in publications as the Sarkosyl-insoluble COMC (Chlamydia outer membrane complex), and serves as the functional equivalent of peptidoglycan. In Chlamydia pneumoniae (Chlamydophila pneumoniae), this protein is Small cysteine-rich outer membrane protein OmcA (omcA).